The sequence spans 226 residues: Thioredoxin domain-containing protein 9 (226 aa).

Positions Leu52 to Gly180 constitute a Thioredoxin domain. A phosphoserine mark is found at Ser188, Ser221, and Ser223.

Forms ternary complexes with the chaperonin TCP1 complex, spanning the cylindrical chaperonin cavity and contacting at least 2 subunits.

It localises to the cytoplasm. The protein resides in the nucleus. Its subcellular location is the cytoskeleton. It is found in the microtubule organizing center. The protein localises to the centrosome. It localises to the midbody. In terms of biological role, significantly diminishes the chaperonin TCP1 complex ATPase activity, thus negatively impacts protein folding, including that of actin or tubulin. The sequence is that of Thioredoxin domain-containing protein 9 (TXNDC9) from Bos taurus (Bovine).